Consider the following 448-residue polypeptide: Tubulin alpha chain (448 aa).

Residues Gln-12, Glu-73, Ser-142, Gly-146, Thr-147, Thr-181, Asn-208, and Asn-230 each coordinate GTP. Glu-73 is a binding site for Mg(2+). Glu-256 is an active-site residue.

The protein belongs to the tubulin family. As to quaternary structure, dimer of alpha and beta chains. A typical microtubule is a hollow water-filled tube with an outer diameter of 25 nm and an inner diameter of 15 nM. Alpha-beta heterodimers associate head-to-tail to form protofilaments running lengthwise along the microtubule wall with the beta-tubulin subunit facing the microtubule plus end conferring a structural polarity. Microtubules usually have 13 protofilaments but different protofilament numbers can be found in some organisms and specialized cells. Requires Mg(2+) as cofactor.

The protein resides in the cytoplasm. It is found in the cytoskeleton. It catalyses the reaction GTP + H2O = GDP + phosphate + H(+). In terms of biological role, tubulin is the major constituent of microtubules, a cylinder consisting of laterally associated linear protofilaments composed of alpha- and beta-tubulin heterodimers. Microtubules grow by the addition of GTP-tubulin dimers to the microtubule end, where a stabilizing cap forms. Below the cap, tubulin dimers are in GDP-bound state, owing to GTPase activity of alpha-tubulin. In Eremothecium gossypii (strain ATCC 10895 / CBS 109.51 / FGSC 9923 / NRRL Y-1056) (Yeast), this protein is Tubulin alpha chain (TUB1).